A 354-amino-acid polypeptide reads, in one-letter code: Uroporphyrinogen decarboxylase (354 aa).

Substrate is bound by residues 27–31 (RQAGR), Asp-77, Tyr-154, Thr-209, and His-327.

This sequence belongs to the uroporphyrinogen decarboxylase family. As to quaternary structure, homodimer.

The protein resides in the cytoplasm. The catalysed reaction is uroporphyrinogen III + 4 H(+) = coproporphyrinogen III + 4 CO2. It participates in porphyrin-containing compound metabolism; protoporphyrin-IX biosynthesis; coproporphyrinogen-III from 5-aminolevulinate: step 4/4. In terms of biological role, catalyzes the decarboxylation of four acetate groups of uroporphyrinogen-III to yield coproporphyrinogen-III. The sequence is that of Uroporphyrinogen decarboxylase from Klebsiella pneumoniae subsp. pneumoniae (strain ATCC 700721 / MGH 78578).